The following is a 160-amino-acid chain: SsrA-binding protein (160 aa).

The disordered stretch occupies residues Lys-132 to Glu-160. Positions Asp-135–Gln-146 are enriched in basic and acidic residues.

This sequence belongs to the SmpB family.

Its subcellular location is the cytoplasm. Its function is as follows. Required for rescue of stalled ribosomes mediated by trans-translation. Binds to transfer-messenger RNA (tmRNA), required for stable association of tmRNA with ribosomes. tmRNA and SmpB together mimic tRNA shape, replacing the anticodon stem-loop with SmpB. tmRNA is encoded by the ssrA gene; the 2 termini fold to resemble tRNA(Ala) and it encodes a 'tag peptide', a short internal open reading frame. During trans-translation Ala-aminoacylated tmRNA acts like a tRNA, entering the A-site of stalled ribosomes, displacing the stalled mRNA. The ribosome then switches to translate the ORF on the tmRNA; the nascent peptide is terminated with the 'tag peptide' encoded by the tmRNA and targeted for degradation. The ribosome is freed to recommence translation, which seems to be the essential function of trans-translation. This is SsrA-binding protein from Leptospira borgpetersenii serovar Hardjo-bovis (strain JB197).